The primary structure comprises 580 residues: Fumarate hydratase class I, aerobic (580 aa).

Residues Cys-105, Cys-224, and Cys-318 each coordinate [4Fe-4S] cluster.

This sequence belongs to the class-I fumarase family. As to quaternary structure, homodimer. It depends on [4Fe-4S] cluster as a cofactor.

It catalyses the reaction (S)-malate = fumarate + H2O. The catalysed reaction is oxaloacetate = enol-oxaloacetate. It functions in the pathway carbohydrate metabolism; tricarboxylic acid cycle; (S)-malate from fumarate: step 1/1. Its function is as follows. Catalyzes the reversible hydration of fumarate to (S)-malate. Functions as an aerobic enzyme in the direction of malate formation as part of the citric acid cycle. Accounts for about 80% of the fumarase activity when the bacteria grow aerobically. To a lesser extent, also displays D-tartrate dehydratase activity in vitro, but is not able to convert (R)-malate, L-tartrate or meso-tartrate. Can also catalyze the isomerization of enol- to keto-oxaloacetate. This chain is Fumarate hydratase class I, aerobic, found in Salmonella typhimurium (strain LT2 / SGSC1412 / ATCC 700720).